A 193-amino-acid polypeptide reads, in one-letter code: Xanthine phosphoribosyltransferase (193 aa).

The xanthine site is built by L20 and T27. Residue 128-132 (ANGQA) coordinates 5-phospho-alpha-D-ribose 1-diphosphate. Position 156 (K156) interacts with xanthine.

This sequence belongs to the purine/pyrimidine phosphoribosyltransferase family. Xpt subfamily. Homodimer.

It localises to the cytoplasm. It carries out the reaction XMP + diphosphate = xanthine + 5-phospho-alpha-D-ribose 1-diphosphate. It participates in purine metabolism; XMP biosynthesis via salvage pathway; XMP from xanthine: step 1/1. Functionally, converts the preformed base xanthine, a product of nucleic acid breakdown, to xanthosine 5'-monophosphate (XMP), so it can be reused for RNA or DNA synthesis. The sequence is that of Xanthine phosphoribosyltransferase from Streptococcus pneumoniae (strain CGSP14).